Reading from the N-terminus, the 180-residue chain is Cell division protein ZapC (180 aa).

Belongs to the ZapC family. In terms of assembly, interacts directly with FtsZ.

The protein resides in the cytoplasm. Contributes to the efficiency of the cell division process by stabilizing the polymeric form of the cell division protein FtsZ. Acts by promoting interactions between FtsZ protofilaments and suppressing the GTPase activity of FtsZ. This chain is Cell division protein ZapC, found in Vibrio vulnificus (strain CMCP6).